The sequence spans 87 residues: Cuticle protein 1 (87 aa).

Pyrrolidone carboxylic acid is present on glutamine 1. 3 repeat units span residues 5–20 (YPAG…YPNC), 43–58 (YPAG…YPFC), and 71–86 (YPAG…YPYC). Cystine bridges form between cysteine 14/cysteine 20, cysteine 52/cysteine 58, and cysteine 80/cysteine 86.

The protein is Cuticle protein 1 of Blaberus craniifer (Death's head cockroach).